The following is an 819-amino-acid chain: FYN-binding protein 1 (819 aa).

The segment covering 1–45 (MAKFNTGSNPTEEAATSSRPFKVAGQSSPSGIQSRKNLFDNQGNA) has biased composition (polar residues). Residues 1–490 (MAKFNTGSNP…REKKEQELKK (490 aa)) are disordered. Lysine 3 is modified (N6-acetyllysine). Serine 28 and serine 46 each carry phosphoserine. The segment covering 69–79 (TYEEKPEKEPK) has biased composition (basic and acidic residues). Residues 150-160 (GPKPGPAPPVP) show a composition bias toward pro residues. Serine 222 is modified (phosphoserine). Composition is skewed to basic and acidic residues over residues 237–248 (PPKEDPEDKDHG) and 273–285 (NFEE…KTDL). Position 318 is a phosphoserine (serine 318). 2 stretches are compositionally biased toward pro residues: residues 342 to 351 (GPPPPKPNRP) and 380 to 412 (LPPP…PRNI). Residues 439 to 453 (LEEEQESEGETYEDI) show a composition bias toward acidic residues. Phosphoserine is present on serine 445. A coiled-coil region spans residues 448–495 (ETYEDIDSSKERDKKREKEEKKRLELERKEQKEREKKEQELKKKFKLT). Residues 454-489 (DSSKERDKKREKEEKKRLELERKEQKEREKKEQELK) are compositionally biased toward basic and acidic residues. Residues 479–493 (KEREKKEQELKKKFK) carry the Nuclear localization signal motif. The SH3 1 domain maps to 499 to 560 (QVIHHAKACC…KTTAVEIDYD (62 aa)). The residue at position 559 (tyrosine 559) is a Phosphotyrosine. Residues serine 561 and serine 568 each carry the phosphoserine modification. The SH2-binding; to LCP2 motif lies at 584 to 587 (YDDV). 2 disordered regions span residues 589-635 (EQDA…DEKT) and 649-728 (KDDR…EKEE). Residues 610–626 (TDDEIYDGIEEEDDDDG) show a composition bias toward acidic residues. Residues 615-618 (YDGI) carry the SH2-binding; to FYN motif. Over residues 649–664 (KDDRKKSIREKPKVSE) the composition is skewed to basic and acidic residues. Polar residues predominate over residues 668 to 677 (NEGSSLPSQH). The span at 682–692 (VGEEVYDDVDA) shows a compositional bias: acidic residues. Tyrosine 687 carries the post-translational modification Phosphotyrosine. The Nuclear localization signal signature appears at 710 to 736 (RAKTEEKDPKKLKKQEKEEKDLRKKFK). Residues 711–728 (AKTEEKDPKKLKKQEKEE) show a composition bias toward basic and acidic residues. The SH3 2 domain occupies 736 to 804 (KYDGEIRVLY…LRSYLVDNDG (69 aa)).

As to quaternary structure, part of a complex consisting of SKAP2, FYB1 and PTPNS1. Part of a complex consisting of SKAP2, FYB1 and PIRB. Part of a complex consisting of SKAP1, FYB1 and CLNK. Interacts with CLNK (via its SH2 domain); this interaction allows SKAP1 and FYB1 to recruit FYN to the complex, thus promoting the phosphorylation of CLNK by FYN. Interacts with FYN. Interacts with LCP2. Interacts with SKAP1. Interacts with SKAP2. Interacts with FASLG. Interacts with EVL. Interacts with TMEM47. Interacts with LCK. In terms of processing, T-cell receptor ligation leads to increased tyrosine phosphorylation. In terms of tissue distribution, expressed in hematopoietic tissues such as myeloid and T-cells, spleen and thymus. Not expressed in B-cells, nor in non-lymphoid tissues. FYB-130 is preferentially expressed in mature T-cells compared to FYB-120, whereas thymocytes showed a greater relative amount of FYB-120. Expressed in podocytes.

The protein localises to the cytoplasm. It is found in the nucleus. It localises to the cell junction. Functionally, acts as an adapter protein of the FYN and LCP2 signaling cascades in T-cells. May play a role in linking T-cell signaling to remodeling of the actin cytoskeleton. Modulates the expression of IL2. Involved in platelet activation. Prevents the degradation of SKAP1 and SKAP2. May be involved in high affinity immunoglobulin epsilon receptor signaling in mast cells. The sequence is that of FYN-binding protein 1 (Fyb1) from Mus musculus (Mouse).